The chain runs to 388 residues: Formate-dependent phosphoribosylglycinamide formyltransferase (388 aa).

Residues 15-16 (EL) and glutamate 75 contribute to the N(1)-(5-phospho-beta-D-ribosyl)glycinamide site. Residues arginine 107, lysine 148, 153-158 (SSGKGQ), 188-191 (EEFL), and glutamate 196 contribute to the ATP site. An ATP-grasp domain is found at 112–302 (DLASAELALL…EFELHLRAVL (191 aa)). Residues glutamate 261 and glutamate 273 each coordinate Mg(2+). N(1)-(5-phospho-beta-D-ribosyl)glycinamide contacts are provided by residues aspartate 280, lysine 350, and 357–358 (RR).

It belongs to the PurK/PurT family. As to quaternary structure, homodimer.

The catalysed reaction is N(1)-(5-phospho-beta-D-ribosyl)glycinamide + formate + ATP = N(2)-formyl-N(1)-(5-phospho-beta-D-ribosyl)glycinamide + ADP + phosphate + H(+). It functions in the pathway purine metabolism; IMP biosynthesis via de novo pathway; N(2)-formyl-N(1)-(5-phospho-D-ribosyl)glycinamide from N(1)-(5-phospho-D-ribosyl)glycinamide (formate route): step 1/1. Involved in the de novo purine biosynthesis. Catalyzes the transfer of formate to 5-phospho-ribosyl-glycinamide (GAR), producing 5-phospho-ribosyl-N-formylglycinamide (FGAR). Formate is provided by PurU via hydrolysis of 10-formyl-tetrahydrofolate. This is Formate-dependent phosphoribosylglycinamide formyltransferase from Prochlorococcus marinus (strain MIT 9313).